The chain runs to 218 residues: N-(5'-phosphoribosyl)anthranilate isomerase (218 aa).

Belongs to the TrpF family.

The catalysed reaction is N-(5-phospho-beta-D-ribosyl)anthranilate = 1-(2-carboxyphenylamino)-1-deoxy-D-ribulose 5-phosphate. The protein operates within amino-acid biosynthesis; L-tryptophan biosynthesis; L-tryptophan from chorismate: step 3/5. The protein is N-(5'-phosphoribosyl)anthranilate isomerase of Bacillus licheniformis (strain ATCC 14580 / DSM 13 / JCM 2505 / CCUG 7422 / NBRC 12200 / NCIMB 9375 / NCTC 10341 / NRRL NRS-1264 / Gibson 46).